The chain runs to 408 residues: Exodeoxyribonuclease 7 large subunit (408 aa).

Belongs to the XseA family. As to quaternary structure, heterooligomer composed of large and small subunits.

It localises to the cytoplasm. It catalyses the reaction Exonucleolytic cleavage in either 5'- to 3'- or 3'- to 5'-direction to yield nucleoside 5'-phosphates.. Functionally, bidirectionally degrades single-stranded DNA into large acid-insoluble oligonucleotides, which are then degraded further into small acid-soluble oligonucleotides. In Alkaliphilus oremlandii (strain OhILAs) (Clostridium oremlandii (strain OhILAs)), this protein is Exodeoxyribonuclease 7 large subunit.